Consider the following 252-residue polypeptide: dITP/XTP pyrophosphatase (252 aa).

7-12 (THNEGK) serves as a coordination point for substrate. Asp-74 acts as the Proton acceptor in catalysis. Residue Asp-74 participates in Mg(2+) binding. Substrate is bound by residues Ser-75 and 193–196 (FGYD). Residues 201–224 (PDDQPAGRVSTEPDHEGEPLTSAE) form a disordered region. Residues Lys-230 and 235-236 (HR) contribute to the substrate site.

Belongs to the HAM1 NTPase family. Homodimer. Mg(2+) is required as a cofactor.

It carries out the reaction XTP + H2O = XMP + diphosphate + H(+). The enzyme catalyses dITP + H2O = dIMP + diphosphate + H(+). The catalysed reaction is ITP + H2O = IMP + diphosphate + H(+). Its function is as follows. Pyrophosphatase that catalyzes the hydrolysis of nucleoside triphosphates to their monophosphate derivatives, with a high preference for the non-canonical purine nucleotides XTP (xanthosine triphosphate), dITP (deoxyinosine triphosphate) and ITP. Seems to function as a house-cleaning enzyme that removes non-canonical purine nucleotides from the nucleotide pool, thus preventing their incorporation into DNA/RNA and avoiding chromosomal lesions. The polypeptide is dITP/XTP pyrophosphatase (Bifidobacterium longum subsp. infantis (strain ATCC 15697 / DSM 20088 / JCM 1222 / NCTC 11817 / S12)).